A 179-amino-acid chain; its full sequence is Putative ADP-ribosylation factor-like protein 5C (179 aa).

The N-myristoyl glycine moiety is linked to residue glycine 2. GTP contacts are provided by residues 23–30, 66–70, and 125–128; these read GLDNEGKT, DIVRP, and NKQD.

This sequence belongs to the small GTPase superfamily. Arf family.

Functionally, binds and exchanges GTP and GDP. This Homo sapiens (Human) protein is Putative ADP-ribosylation factor-like protein 5C (ARL5C).